The sequence spans 310 residues: Ribosomal RNA small subunit methyltransferase H (310 aa).

S-adenosyl-L-methionine-binding positions include 47–49 (GGH), Asp66, Phe93, Asp108, and Gln115. The disordered stretch occupies residues 275–310 (RKPFMASEQEQADNPRSRSAKLRIARRRPDTARSGP). Over residues 301–310 (RRPDTARSGP) the composition is skewed to basic and acidic residues.

The protein belongs to the methyltransferase superfamily. RsmH family.

It is found in the cytoplasm. It catalyses the reaction cytidine(1402) in 16S rRNA + S-adenosyl-L-methionine = N(4)-methylcytidine(1402) in 16S rRNA + S-adenosyl-L-homocysteine + H(+). Functionally, specifically methylates the N4 position of cytidine in position 1402 (C1402) of 16S rRNA. This is Ribosomal RNA small subunit methyltransferase H from Synechococcus sp. (strain CC9311).